The primary structure comprises 158 residues: DNA-binding transcriptional repressor RacR (158 aa).

In terms of assembly, homooctamer.

Its function is as follows. Transcriptional regulator that represses the expression of ydaS and ydaT under normal physiological conditions. It binds to its own upstream sequence and represses the adjacent and divergently coded ydaS-ydaT operon. RacR-mediated down-regulation of ydaS and ydaT may be critical for cell survival. RacR ensures that the prophage DNA is maintained in the genome. When the expression of the racR gene is reduced, the prophage Rac is excised from the genome, possibly to counteract the lethal toxicity of YdaT. This Escherichia coli (strain K12) protein is DNA-binding transcriptional repressor RacR (racR).